The primary structure comprises 72 residues: MNLGINYDRILNKAKYKYVIPIIAAKRAETLKNLDELKGITEKKDYVSIALKELENGKIQVKNSALLDSLSK.

The protein belongs to the RNA polymerase subunit omega family. In terms of assembly, the RNAP catalytic core consists of 2 alpha, 1 beta, 1 beta' and 1 omega subunit. When a sigma factor is associated with the core the holoenzyme is formed, which can initiate transcription.

The enzyme catalyses RNA(n) + a ribonucleoside 5'-triphosphate = RNA(n+1) + diphosphate. Its function is as follows. Promotes RNA polymerase assembly. Latches the N- and C-terminal regions of the beta' subunit thereby facilitating its interaction with the beta and alpha subunits. This Petrotoga mobilis (strain DSM 10674 / SJ95) protein is DNA-directed RNA polymerase subunit omega.